A 418-amino-acid chain; its full sequence is Zinc metalloproteinase nas-8 (418 aa).

The first 28 residues, 1 to 28 (MMNRASLCRIAVLLCILHLSHLIDSTYA), serve as a signal peptide directing secretion. A propeptide spanning residues 29-100 (QSYLTEKDFL…TSKLKSGVRR (72 aa)) is cleaved from the precursor. Positions 101-296 (NGVTSVIKRW…LKINKLYNCP (196 aa)) constitute a Peptidase M12A domain. 5 disulfide bridges follow: Cys143/Cys295, Cys165/Cys184, Cys347/Cys381, Cys354/Cys374, and Cys361/Cys378. His192 lines the Zn(2+) pocket. Glu193 is an active-site residue. Positions 196 and 202 each coordinate Zn(2+). One can recognise a ShKT domain in the interval 347–381 (CSDRTNLCWRWLDRCRSYFFEKIMKEFCALSCGYC).

Requires Zn(2+) as cofactor.

The protein resides in the secreted. The enzyme catalyses Hydrolysis of peptide bonds in substrates containing five or more amino acids, preferentially with Ala in P1', and Pro in P2'.. With respect to regulation, inhibited by ethylene glycol-bis(2-aminoethylether)-N,N,N,N-tetraacetic acid (EGTA), ethylenediaminetetraacetic acid (EDTA) and o-phenanthroline. In terms of biological role, metalloprotease. In Steinernema carpocapsae (Entomopathogenic nematode), this protein is Zinc metalloproteinase nas-8.